We begin with the raw amino-acid sequence, 269 residues long: Protein LNK3 (269 aa).

Interacts with REV8.

In terms of biological role, probable transcriptional coactivator. This Arabidopsis thaliana (Mouse-ear cress) protein is Protein LNK3.